Consider the following 293-residue polypeptide: Ribosomal protein L11 methyltransferase (293 aa).

S-adenosyl-L-methionine contacts are provided by Thr145, Gly166, Asp188, and Asn230.

It belongs to the methyltransferase superfamily. PrmA family.

The protein localises to the cytoplasm. The enzyme catalyses L-lysyl-[protein] + 3 S-adenosyl-L-methionine = N(6),N(6),N(6)-trimethyl-L-lysyl-[protein] + 3 S-adenosyl-L-homocysteine + 3 H(+). Functionally, methylates ribosomal protein L11. The protein is Ribosomal protein L11 methyltransferase of Mannheimia succiniciproducens (strain KCTC 0769BP / MBEL55E).